The sequence spans 267 residues: Putative phosphoenolpyruvate synthase regulatory protein (267 aa).

Residue 147-154 (GVSRSGKT) participates in ADP binding.

Belongs to the pyruvate, phosphate/water dikinase regulatory protein family. PSRP subfamily.

The enzyme catalyses [pyruvate, water dikinase] + ADP = [pyruvate, water dikinase]-phosphate + AMP + H(+). It carries out the reaction [pyruvate, water dikinase]-phosphate + phosphate + H(+) = [pyruvate, water dikinase] + diphosphate. Its function is as follows. Bifunctional serine/threonine kinase and phosphorylase involved in the regulation of the phosphoenolpyruvate synthase (PEPS) by catalyzing its phosphorylation/dephosphorylation. The sequence is that of Putative phosphoenolpyruvate synthase regulatory protein from Cupriavidus necator (strain ATCC 17699 / DSM 428 / KCTC 22496 / NCIMB 10442 / H16 / Stanier 337) (Ralstonia eutropha).